The chain runs to 831 residues: Periplasmic nitrate reductase (831 aa).

Residues 1-31 constitute a signal peptide (tat-type signal); it reads MTISRRDLLKAQAAGIAAMAANIPLSSQAPA. A 4Fe-4S Mo/W bis-MGD-type domain is found at 41-97; it reads ITWSKAPCRFCGTGCGVMVGVKEGRVVATHGDLLAEVNRGLNCVKGYFLSKIMYGAD. Residues Cys48, Cys51, Cys55, and Cys83 each coordinate [4Fe-4S] cluster. Mo-bis(molybdopterin guanine dinucleotide) contacts are provided by residues Lys85, Gln152, Asn177, Cys181, 214–221, 245–249, 264–266, Met375, Gln379, Asn485, 511–512, Lys534, Asp561, and 721–730; these read WGSNMAEM, STFTH, GTD, SD, and TGRVLEHWHS. Position 797 (Trp797) interacts with substrate. Asn805 and Lys822 together coordinate Mo-bis(molybdopterin guanine dinucleotide).

The protein belongs to the prokaryotic molybdopterin-containing oxidoreductase family. NasA/NapA/NarB subfamily. As to quaternary structure, component of the periplasmic nitrate reductase NapAB complex composed of NapA and NapB. The cofactor is [4Fe-4S] cluster. Mo-bis(molybdopterin guanine dinucleotide) serves as cofactor. Post-translationally, predicted to be exported by the Tat system. The position of the signal peptide cleavage has not been experimentally proven.

Its subcellular location is the periplasm. It catalyses the reaction 2 Fe(II)-[cytochrome] + nitrate + 2 H(+) = 2 Fe(III)-[cytochrome] + nitrite + H2O. Catalytic subunit of the periplasmic nitrate reductase complex NapAB. Receives electrons from NapB and catalyzes the reduction of nitrate to nitrite. The chain is Periplasmic nitrate reductase from Paracoccus pantotrophus (Thiosphaera pantotropha).